A 144-amino-acid polypeptide reads, in one-letter code: Putative pre-16S rRNA nuclease (144 aa).

Belongs to the YqgF nuclease family.

It is found in the cytoplasm. Functionally, could be a nuclease involved in processing of the 5'-end of pre-16S rRNA. The chain is Putative pre-16S rRNA nuclease from Symbiobacterium thermophilum (strain DSM 24528 / JCM 14929 / IAM 14863 / T).